A 1202-amino-acid polypeptide reads, in one-letter code: DNA-directed RNA polymerase subunit beta (1202 aa).

It belongs to the RNA polymerase beta chain family. As to quaternary structure, the RNAP catalytic core consists of 2 alpha, 1 beta, 1 beta' and 1 omega subunit. When a sigma factor is associated with the core the holoenzyme is formed, which can initiate transcription.

The catalysed reaction is RNA(n) + a ribonucleoside 5'-triphosphate = RNA(n+1) + diphosphate. DNA-dependent RNA polymerase catalyzes the transcription of DNA into RNA using the four ribonucleoside triphosphates as substrates. The sequence is that of DNA-directed RNA polymerase subunit beta from Mycoplasmopsis synoviae (strain 53) (Mycoplasma synoviae).